The chain runs to 395 residues: General transcription factor IIH subunit 2-like protein (395 aa).

Positions 60–236 constitute a VWFA domain; that stretch reads HLYVVVDGSR…HYKELLTHHL (177 aa). Y95 is subject to Phosphotyrosine. The segment at 291 to 308 adopts a C4-type zinc-finger fold; sequence CPQCRAKYCELPVECKIC.

It belongs to the GTF2H2 family.

It is found in the nucleus. Its function is as follows. Component of the core-TFIIH basal transcription factor involved in nucleotide excision repair (NER) of DNA and, when complexed to CAK, in RNA transcription by RNA polymerase II. This is General transcription factor IIH subunit 2-like protein (GTF2H2C) from Homo sapiens (Human).